Here is a 361-residue protein sequence, read N- to C-terminus: MSKFSFNINHQYKKARSGIITTAHGNIRTPAFMPVGTRGTVKAMLPESVAETGADILLGNTYHLMLQPSAERIAKLGGLHKFMNWGKPILTDSGGFQVMSLSKLRKITEEGVSFNSHINGDKYLLTPERSTEIQHLLGSTITMAFDECTPYPATFEEAKTSMQLTTRWAHRSREAFVKRDGYAQFGIIQGSTYEELREQSAKDLIELDFEGYAIGGLAVGEGQELMFKVLDYAPDFLPQNKPRYLMGVGKPADIIGAVSRGVDMFDCVIPTRSGRNGQAFTKYGTVNIRNSKYAEDNDPLEADCLCPACQNYSKAYLHHLVRIGEILGAMLMTWHNLTYFQNLMSRIREYIALGKDFDFTT.

Catalysis depends on D92, which acts as the Proton acceptor. Substrate is bound by residues 92 to 96, D146, Q189, and G216; that span reads DSGGF. Residues 247-253 are RNA binding; it reads GVGKPAD. D266 acts as the Nucleophile in catalysis. The segment at 271 to 275 is RNA binding; important for wobble base 34 recognition; it reads TRSGR. Residues C304, C306, C309, and H335 each contribute to the Zn(2+) site.

The protein belongs to the queuine tRNA-ribosyltransferase family. Homodimer. Within each dimer, one monomer is responsible for RNA recognition and catalysis, while the other monomer binds to the replacement base PreQ1. It depends on Zn(2+) as a cofactor.

It catalyses the reaction 7-aminomethyl-7-carbaguanine + guanosine(34) in tRNA = 7-aminomethyl-7-carbaguanosine(34) in tRNA + guanine. It participates in tRNA modification; tRNA-queuosine biosynthesis. Its function is as follows. Catalyzes the base-exchange of a guanine (G) residue with the queuine precursor 7-aminomethyl-7-deazaguanine (PreQ1) at position 34 (anticodon wobble position) in tRNAs with GU(N) anticodons (tRNA-Asp, -Asn, -His and -Tyr). Catalysis occurs through a double-displacement mechanism. The nucleophile active site attacks the C1' of nucleotide 34 to detach the guanine base from the RNA, forming a covalent enzyme-RNA intermediate. The proton acceptor active site deprotonates the incoming PreQ1, allowing a nucleophilic attack on the C1' of the ribose to form the product. After dissociation, two additional enzymatic reactions on the tRNA convert PreQ1 to queuine (Q), resulting in the hypermodified nucleoside queuosine (7-(((4,5-cis-dihydroxy-2-cyclopenten-1-yl)amino)methyl)-7-deazaguanosine). This chain is Queuine tRNA-ribosyltransferase, found in Rickettsia bellii (strain OSU 85-389).